We begin with the raw amino-acid sequence, 334 residues long: Tetratricopeptide repeat protein 24 (334 aa).

TPR repeat units lie at residues 35 to 68 (GPFY…CRQP), 72 to 105 (ATVL…HGSV), 112 to 145 (GRSF…AQDT), and 152 to 185 (WQAC…CQHE). Residues 220 to 258 (PGKLQTSRKAKTSARVQSSAEDAQESQWEGEASEGGHEK) are disordered. Residues 233 to 246 (ARVQSSAEDAQESQ) show a composition bias toward polar residues.

The protein is Tetratricopeptide repeat protein 24 (Ttc24) of Mus musculus (Mouse).